Consider the following 509-residue polypeptide: Putative ATP-dependent RNA helicase QP509L (509 aa).

The Helicase ATP-binding domain occupies 110–262 (KKLLSPYGRF…KIIIHHLGQP (153 aa)). Residue 123–130 (LNTGLGKT) coordinates ATP. A DEAH box motif is present at residues 215 to 218 (DEAH).

This sequence belongs to the DEAD box helicase family. DEAH subfamily.

It catalyses the reaction ATP + H2O = ADP + phosphate + H(+). This chain is Putative ATP-dependent RNA helicase QP509L, found in African swine fever virus (strain Badajoz 1971 Vero-adapted) (Ba71V).